We begin with the raw amino-acid sequence, 133 residues long: MTLNLCVLTPNRIVWDSEVKEIILSTNSGQIGVLPNHAPIATAVDIGILRIRFNDQWLTMALMGGFARIGNNEITILVNDAEKSSDIDPQEAQQTLEIAEANLRKAESKRQTIEANLALRRARTRVEVINAIS.

This sequence belongs to the ATPase epsilon chain family. As to quaternary structure, F-type ATPases have 2 components, CF(1) - the catalytic core - and CF(0) - the membrane proton channel. CF(1) has five subunits: alpha(3), beta(3), gamma(1), delta(1), epsilon(1). CF(0) has three main subunits: a, b and c.

It is found in the plastid. It localises to the chloroplast thylakoid membrane. In terms of biological role, produces ATP from ADP in the presence of a proton gradient across the membrane. The sequence is that of ATP synthase epsilon chain, chloroplastic from Citrus sinensis (Sweet orange).